A 439-amino-acid chain; its full sequence is Tol-Pal system protein TolB (439 aa).

Residues 1-21 (MRFRLALSLLSLALFAAPAAA) form the signal peptide.

It belongs to the TolB family. The Tol-Pal system is composed of five core proteins: the inner membrane proteins TolA, TolQ and TolR, the periplasmic protein TolB and the outer membrane protein Pal. They form a network linking the inner and outer membranes and the peptidoglycan layer.

It is found in the periplasm. In terms of biological role, part of the Tol-Pal system, which plays a role in outer membrane invagination during cell division and is important for maintaining outer membrane integrity. In Rhizorhabdus wittichii (strain DSM 6014 / CCUG 31198 / JCM 15750 / NBRC 105917 / EY 4224 / RW1) (Sphingomonas wittichii), this protein is Tol-Pal system protein TolB.